Reading from the N-terminus, the 458-residue chain is Cysteine--tRNA ligase (458 aa).

C29 is a binding site for Zn(2+). The 'HIGH' region signature appears at 31–41 (PTVYDFLHIGN). Zn(2+)-binding residues include C211, H236, and E240. Residues 269-273 (KMSKS) carry the 'KMSKS' region motif. K272 is an ATP binding site.

The protein belongs to the class-I aminoacyl-tRNA synthetase family. As to quaternary structure, monomer. Zn(2+) is required as a cofactor.

It localises to the cytoplasm. The catalysed reaction is tRNA(Cys) + L-cysteine + ATP = L-cysteinyl-tRNA(Cys) + AMP + diphosphate. The protein is Cysteine--tRNA ligase of Beijerinckia indica subsp. indica (strain ATCC 9039 / DSM 1715 / NCIMB 8712).